A 318-amino-acid polypeptide reads, in one-letter code: Mitochondrial coenzyme A transporter SLC25A42 (318 aa).

Solcar repeat units follow at residues 31 to 117 (RQVL…YKRI), 129 to 214 (LPPW…LKSL), and 224 to 312 (PYPF…MQIL). 6 helical membrane-spanning segments follow: residues 33–53 (VLSSLLSGALAGALAKTAVAP), 89–109 (LWRGNSATMVRVIPYAAIQFS), 135–155 (LLAGALAGTTAASLTYPLDLV), 186–206 (LYFGFTPTVLGVIPYAGLSFF), 230–250 (MVFGACAGLIGQSASYPLDVV), and 293–313 (LKGPIAVGISFTTFDLMQILL).

It belongs to the mitochondrial carrier (TC 2.A.29) family.

It localises to the mitochondrion inner membrane. The enzyme catalyses ADP(out) + CoA(in) = ADP(in) + CoA(out). It catalyses the reaction 3'-dephospho-CoA(in) + ADP(out) = 3'-dephospho-CoA(out) + ADP(in). It carries out the reaction adenosine 3',5'-bisphosphate(in) + ADP(out) = adenosine 3',5'-bisphosphate(out) + ADP(in). The catalysed reaction is AMP(in) + ADP(out) = AMP(out) + ADP(in). The enzyme catalyses dADP(in) + ADP(out) = dADP(out) + ADP(in). It catalyses the reaction ADP(in) + ATP(out) = ADP(out) + ATP(in). Mitochondrial carrier mediating the transport of coenzyme A (CoA) in mitochondria in exchange for intramitochondrial (deoxy)adenine nucleotides and adenosine 3',5'-diphosphate. This is Mitochondrial coenzyme A transporter SLC25A42 (Slc25a42) from Mus musculus (Mouse).